Consider the following 532-residue polypeptide: O-phosphoserine--tRNA(Cys) ligase (532 aa).

Residues 188–190 (HMT), 233–235 (SAS), 275–276 (YY), and Asn-327 contribute to the substrate site.

Belongs to the class-II aminoacyl-tRNA synthetase family. O-phosphoseryl-tRNA(Cys) synthetase subfamily. In terms of assembly, homotetramer. Interacts with SepCysS.

It catalyses the reaction tRNA(Cys) + O-phospho-L-serine + ATP = O-phospho-L-seryl-tRNA(Cys) + AMP + diphosphate. Its function is as follows. Catalyzes the attachment of O-phosphoserine (Sep) to tRNA(Cys). In Methanocella arvoryzae (strain DSM 22066 / NBRC 105507 / MRE50), this protein is O-phosphoserine--tRNA(Cys) ligase.